The sequence spans 328 residues: GTP 3',8-cyclase (328 aa).

The region spanning 1–229 (MNQVDYLRIS…DAQVRGSGPA (229 aa)) is the Radical SAM core domain. Arg8 contributes to the GTP binding site. Positions 15 and 19 each coordinate [4Fe-4S] cluster. Tyr21 contacts S-adenosyl-L-methionine. Cys22 contributes to the [4Fe-4S] cluster binding site. Arg60 lines the GTP pocket. Gly64 lines the S-adenosyl-L-methionine pocket. Thr91 lines the GTP pocket. Ser115 provides a ligand contact to S-adenosyl-L-methionine. Position 155 (Lys155) interacts with GTP. Met189 provides a ligand contact to S-adenosyl-L-methionine. [4Fe-4S] cluster contacts are provided by Cys252 and Cys255. A GTP-binding site is contributed by 257 to 259 (RMR). A [4Fe-4S] cluster-binding site is contributed by Cys269.

This sequence belongs to the radical SAM superfamily. MoaA family. In terms of assembly, monomer and homodimer. [4Fe-4S] cluster is required as a cofactor.

The catalysed reaction is GTP + AH2 + S-adenosyl-L-methionine = (8S)-3',8-cyclo-7,8-dihydroguanosine 5'-triphosphate + 5'-deoxyadenosine + L-methionine + A + H(+). Its pathway is cofactor biosynthesis; molybdopterin biosynthesis. Functionally, catalyzes the cyclization of GTP to (8S)-3',8-cyclo-7,8-dihydroguanosine 5'-triphosphate. This Trichormus variabilis (strain ATCC 29413 / PCC 7937) (Anabaena variabilis) protein is GTP 3',8-cyclase.